A 123-amino-acid polypeptide reads, in one-letter code: Iron-sulfur cluster insertion protein ErpA (123 aa).

Positions 51, 115, and 117 each coordinate iron-sulfur cluster.

The protein belongs to the HesB/IscA family. Homodimer. It depends on iron-sulfur cluster as a cofactor.

Its function is as follows. Required for insertion of 4Fe-4S clusters for at least IspG. The polypeptide is Iron-sulfur cluster insertion protein ErpA (Halorhodospira halophila (strain DSM 244 / SL1) (Ectothiorhodospira halophila (strain DSM 244 / SL1))).